The sequence spans 212 residues: Pyridoxine/pyridoxamine 5'-phosphate oxidase (212 aa).

Substrate contacts are provided by residues 8–11 (RTNY) and lysine 66. Residues 61 to 66 (RIVLLK), 76 to 77 (FT), lysine 83, and glutamine 105 contribute to the FMN site. Substrate contacts are provided by tyrosine 123, arginine 127, and serine 131. FMN is bound by residues 140–141 (QS) and tryptophan 185. 191–193 (RLH) contributes to the substrate binding site. Arginine 195 is a binding site for FMN.

The protein belongs to the pyridoxamine 5'-phosphate oxidase family. In terms of assembly, homodimer. FMN serves as cofactor.

It catalyses the reaction pyridoxamine 5'-phosphate + O2 + H2O = pyridoxal 5'-phosphate + H2O2 + NH4(+). The enzyme catalyses pyridoxine 5'-phosphate + O2 = pyridoxal 5'-phosphate + H2O2. The protein operates within cofactor metabolism; pyridoxal 5'-phosphate salvage; pyridoxal 5'-phosphate from pyridoxamine 5'-phosphate: step 1/1. It participates in cofactor metabolism; pyridoxal 5'-phosphate salvage; pyridoxal 5'-phosphate from pyridoxine 5'-phosphate: step 1/1. Catalyzes the oxidation of either pyridoxine 5'-phosphate (PNP) or pyridoxamine 5'-phosphate (PMP) into pyridoxal 5'-phosphate (PLP). The chain is Pyridoxine/pyridoxamine 5'-phosphate oxidase from Leptospira biflexa serovar Patoc (strain Patoc 1 / Ames).